Here is a 149-residue protein sequence, read N- to C-terminus: MTTIDVKVLDPRMADQLPAYATPGSAGLDLRACLDAPLLLEPGQTQLIPTGLSIHIGDPGLAAVILPRSGLGHKHGIVLGNLVGLIDSDYQGPLMVSCWNRGLAAFTVQPLERIAQLVIVPVVQASFRVVDDFGASERGEGGFGSTGQR.

Substrate is bound by residues 68–70 (RSG), asparagine 81, 85–87 (LID), and methionine 95.

It belongs to the dUTPase family. Requires Mg(2+) as cofactor.

It carries out the reaction dUTP + H2O = dUMP + diphosphate + H(+). Its pathway is pyrimidine metabolism; dUMP biosynthesis; dUMP from dCTP (dUTP route): step 2/2. In terms of biological role, this enzyme is involved in nucleotide metabolism: it produces dUMP, the immediate precursor of thymidine nucleotides and it decreases the intracellular concentration of dUTP so that uracil cannot be incorporated into DNA. The polypeptide is Deoxyuridine 5'-triphosphate nucleotidohydrolase (Methylibium petroleiphilum (strain ATCC BAA-1232 / LMG 22953 / PM1)).